Reading from the N-terminus, the 176-residue chain is Crossover junction endodeoxyribonuclease RuvC (176 aa).

Catalysis depends on residues aspartate 12, glutamate 72, and aspartate 144. Mg(2+) contacts are provided by aspartate 12, glutamate 72, and aspartate 144.

This sequence belongs to the RuvC family. In terms of assembly, homodimer which binds Holliday junction (HJ) DNA. The HJ becomes 2-fold symmetrical on binding to RuvC with unstacked arms; it has a different conformation from HJ DNA in complex with RuvA. In the full resolvosome a probable DNA-RuvA(4)-RuvB(12)-RuvC(2) complex forms which resolves the HJ. It depends on Mg(2+) as a cofactor.

Its subcellular location is the cytoplasm. It carries out the reaction Endonucleolytic cleavage at a junction such as a reciprocal single-stranded crossover between two homologous DNA duplexes (Holliday junction).. In terms of biological role, the RuvA-RuvB-RuvC complex processes Holliday junction (HJ) DNA during genetic recombination and DNA repair. Endonuclease that resolves HJ intermediates. Cleaves cruciform DNA by making single-stranded nicks across the HJ at symmetrical positions within the homologous arms, yielding a 5'-phosphate and a 3'-hydroxyl group; requires a central core of homology in the junction. The consensus cleavage sequence is 5'-(A/T)TT(C/G)-3'. Cleavage occurs on the 3'-side of the TT dinucleotide at the point of strand exchange. HJ branch migration catalyzed by RuvA-RuvB allows RuvC to scan DNA until it finds its consensus sequence, where it cleaves and resolves the cruciform DNA. This Methylocella silvestris (strain DSM 15510 / CIP 108128 / LMG 27833 / NCIMB 13906 / BL2) protein is Crossover junction endodeoxyribonuclease RuvC.